The sequence spans 686 residues: LEAF RUST 10 DISEASE-RESISTANCE LOCUS RECEPTOR-LIKE PROTEIN KINASE-like 1.3 (686 aa).

The N-terminal stretch at 1-33 (MFSPVLFRFSKPNSFLVLLFFLSYIHFLPCAQS) is a signal peptide. Over 34-264 (QREPCDTLFR…AGLSKKGKIG (231 aa)) the chain is Extracellular. Residues Asn-76, Asn-93, Asn-175, Asn-190, and Asn-236 are each glycosylated (N-linked (GlcNAc...) asparagine). Residues 265-285 (IGFASGFLGATLIGGCLLCIF) form a helical membrane-spanning segment. Topologically, residues 286-686 (IRRRKKLATQ…SSSNTTASSF (401 aa)) are cytoplasmic. The Protein kinase domain occupies 358–633 (ENFSKELGDG…DEIVEVLRVI (276 aa)). Residues 364–372 (LGDGGFGTV) and Lys-386 contribute to the ATP site. Tyr-432 bears the Phosphotyrosine mark. The Proton acceptor role is filled by Asp-482. The residue at position 515 (Ser-515) is a Phosphoserine. 2 positions are modified to phosphothreonine: Thr-516 and Thr-521. Position 529 is a phosphotyrosine (Tyr-529). Residues 657 to 686 (GLLKHGVPPPLSPETDKTTASSSNTTASSF) are disordered. Residues 674 to 686 (TTASSSNTTASSF) are compositionally biased toward low complexity.

Belongs to the protein kinase superfamily. Ser/Thr protein kinase family.

The protein localises to the cell membrane. The catalysed reaction is L-seryl-[protein] + ATP = O-phospho-L-seryl-[protein] + ADP + H(+). The enzyme catalyses L-threonyl-[protein] + ATP = O-phospho-L-threonyl-[protein] + ADP + H(+). This chain is LEAF RUST 10 DISEASE-RESISTANCE LOCUS RECEPTOR-LIKE PROTEIN KINASE-like 1.3, found in Arabidopsis thaliana (Mouse-ear cress).